A 269-amino-acid polypeptide reads, in one-letter code: Spermatogenesis-associated serine-rich protein 1 (269 aa).

Residues 1-14 (MESSKDTQHGDALE) show a composition bias toward basic and acidic residues. The disordered stretch occupies residues 1–92 (MESSKDTQHG…SKVSLPEIPK (92 aa)). Polar residues predominate over residues 18–38 (CLANRTSSRQNKRTSLSSSDG). Phosphothreonine is present on Thr54. Over residues 67-86 (SSSSSSSSSSAQSNRSSKVS) the composition is skewed to low complexity. Residues Ser72, Ser75, and Ser82 each carry the phosphoserine modification.

This is Spermatogenesis-associated serine-rich protein 1 (Spats1) from Mus musculus (Mouse).